The primary structure comprises 377 residues: Transcription initiation factor IIA subunit 1 (377 aa).

N-acetylalanine is present on Ala-2. Composition is skewed to low complexity over residues 69-79 (QVQQQHQPQQQ), 89-105 (QAQPQQTVPQQAQTQQV), and 248-280 (QAQIPAAGQQQPQAQPAQQQAPLVLQVDGTGDT). Disordered stretches follow at residues 69–107 (QVQQQHQPQQQQHHHHHHHQQAQPQQTVPQQAQTQQVLI) and 248–330 (QAQI…QELF). A phosphoserine; by TAF1 mark is found at Ser-281 and Ser-282. The segment covering 281 to 330 (SSEEDEDEEEDYDDDEEEDKEKDGAEDGQVEEEPLNSEDDVSDEEGQELF) has biased composition (acidic residues). Phosphoserine is present on residues Ser-317 and Ser-322. Residues His-344 and Arg-345 each contribute to the DNA site.

This sequence belongs to the TFIIA subunit 1 family. As to quaternary structure, TFIIA is a heterodimer of the large unprocessed subunit 1 and a small subunit gamma. It was originally believed to be a heterotrimer of an alpha (p35), a beta (p19) and a gamma subunit (p12). TFIIA forms a complex with TBP. Part of TBP-based Pol II pre-initiation complex (PIC), in which Pol II core assembles with general transcription factors and other specific initiation factors including GTF2E1, GTF2E2, GTF2F1, GTF2F2, TCEA1, ERCC2, ERCC3, GTF2H2, GTF2H3, GTF2H4, GTF2H5, GTF2A1, GTF2A2, GTF2B and TBP; this large multi-subunit PIC complex mediates DNA unwinding and targets Pol II core to the transcription start site where the first phosphodiester bond forms. In terms of processing, the alpha and beta subunits are postranslationally produced from the precursor formby TASP1. The cleavage promotes proteasomal degradation.

The protein resides in the nucleus. Functionally, TFIIA is a component of the transcription machinery of RNA polymerase II and plays an important role in transcriptional activation. TFIIA in a complex with TBP mediates transcriptional activity. This chain is Transcription initiation factor IIA subunit 1 (Gtf2a1), found in Rattus norvegicus (Rat).